A 305-amino-acid polypeptide reads, in one-letter code: tRNA-cytidine(32) 2-sulfurtransferase (305 aa).

Residues 1 to 20 (MTAVLPLPHPLADPAPRDPR) are disordered. A PP-loop motif motif is present at residues 59–64 (SGGKDS). [4Fe-4S] cluster contacts are provided by cysteine 134, cysteine 137, and cysteine 225. A compositionally biased stretch (low complexity) spans 282–293 (DAPPDLAPDPGA). The interval 282-305 (DAPPDLAPDPGAWLTASDATHDSD) is disordered.

Belongs to the TtcA family. In terms of assembly, homodimer. Requires Mg(2+) as cofactor. [4Fe-4S] cluster serves as cofactor.

The protein localises to the cytoplasm. It carries out the reaction cytidine(32) in tRNA + S-sulfanyl-L-cysteinyl-[cysteine desulfurase] + AH2 + ATP = 2-thiocytidine(32) in tRNA + L-cysteinyl-[cysteine desulfurase] + A + AMP + diphosphate + H(+). It functions in the pathway tRNA modification. In terms of biological role, catalyzes the ATP-dependent 2-thiolation of cytidine in position 32 of tRNA, to form 2-thiocytidine (s(2)C32). The sulfur atoms are provided by the cysteine/cysteine desulfurase (IscS) system. This chain is tRNA-cytidine(32) 2-sulfurtransferase, found in Xanthomonas oryzae pv. oryzae (strain PXO99A).